We begin with the raw amino-acid sequence, 225 residues long: Ribonuclease 3 (225 aa).

An RNase III domain is found at 7-129 (IPRLCRTLGY…IIGAIYLDSD (123 aa)). Glu-42 is a binding site for Mg(2+). The active site involves Asp-46. Asp-115 and Glu-118 together coordinate Mg(2+). The active site involves Glu-118. A DRBM domain is found at 155–225 (DPKTLLQEYL…AAQVLELIKK (71 aa)).

The protein belongs to the ribonuclease III family. As to quaternary structure, homodimer. Mg(2+) is required as a cofactor.

It localises to the cytoplasm. It catalyses the reaction Endonucleolytic cleavage to 5'-phosphomonoester.. Digests double-stranded RNA. Involved in the processing of primary rRNA transcript to yield the immediate precursors to the large and small rRNAs (23S and 16S). Processes some mRNAs, and tRNAs when they are encoded in the rRNA operon. Processes pre-crRNA and tracrRNA of type II CRISPR loci if present in the organism. The chain is Ribonuclease 3 from Shewanella pealeana (strain ATCC 700345 / ANG-SQ1).